Consider the following 537-residue polypeptide: Arginine--tRNA ligase (537 aa).

A 'HIGH' region motif is present at residues 113–123 (ANPTGELHLGH).

The protein belongs to the class-I aminoacyl-tRNA synthetase family. Monomer.

The protein resides in the cytoplasm. It catalyses the reaction tRNA(Arg) + L-arginine + ATP = L-arginyl-tRNA(Arg) + AMP + diphosphate. The protein is Arginine--tRNA ligase (argS) of Mycoplasma pneumoniae (strain ATCC 29342 / M129 / Subtype 1) (Mycoplasmoides pneumoniae).